The sequence spans 571 residues: Proline--tRNA ligase (571 aa).

It belongs to the class-II aminoacyl-tRNA synthetase family. ProS type 1 subfamily. In terms of assembly, homodimer.

It localises to the cytoplasm. The catalysed reaction is tRNA(Pro) + L-proline + ATP = L-prolyl-tRNA(Pro) + AMP + diphosphate. Its function is as follows. Catalyzes the attachment of proline to tRNA(Pro) in a two-step reaction: proline is first activated by ATP to form Pro-AMP and then transferred to the acceptor end of tRNA(Pro). As ProRS can inadvertently accommodate and process non-cognate amino acids such as alanine and cysteine, to avoid such errors it has two additional distinct editing activities against alanine. One activity is designated as 'pretransfer' editing and involves the tRNA(Pro)-independent hydrolysis of activated Ala-AMP. The other activity is designated 'posttransfer' editing and involves deacylation of mischarged Ala-tRNA(Pro). The misacylated Cys-tRNA(Pro) is not edited by ProRS. The chain is Proline--tRNA ligase from Leuconostoc citreum (strain KM20).